The chain runs to 661 residues: Arginine--tRNA ligase, cytoplasmic (661 aa).

Met1 bears the N-acetylmethionine mark. Residues 1-73 (MDGLVAQCSA…AEKRRRPTKN (73 aa)) are could be involved in the assembly of the multisynthetase complex. L-arginine contacts are provided by residues 201–203 (SPN), His212, Tyr385, Asp389, and Gln413. Residues 202–213 (PNIAKEMHVGHL) carry the 'HIGH' region motif. The tract at residues 530–544 (NTAAYLLYAFTRIRS) is interaction with tRNA.

It belongs to the class-I aminoacyl-tRNA synthetase family. In terms of assembly, interacts (via N-terminus) with AIMP1 (via N-terminus); this stimulates its catalytic activity. Interacts (via N-terminus) with LARS2 (via C-terminus). Monomer. Part of a multisubunit complex that groups tRNA ligases for Arg (RARS1), Asp (DARS1), Gln (QARS1), Ile (IARS1), Leu (LARS1), Lys (KARS1), Met (MARS1) the bifunctional ligase for Glu and Pro (EPRS1) and the auxiliary subunits AIMP1/p43, AIMP2/p38 and EEF1E1/p18. Interacts with QARS1. Part of a complex composed of RARS1, QARS1 and AIMP1.

It is found in the cytoplasm. Its subcellular location is the cytosol. The enzyme catalyses tRNA(Arg) + L-arginine + ATP = L-arginyl-tRNA(Arg) + AMP + diphosphate. In terms of biological role, forms part of a macromolecular complex that catalyzes the attachment of specific amino acids to cognate tRNAs during protein synthesis. Modulates the secretion of AIMP1 and may be involved in generation of the inflammatory cytokine EMAP2 from AIMP1. The protein is Arginine--tRNA ligase, cytoplasmic (RARS1) of Cricetulus griseus (Chinese hamster).